A 551-amino-acid chain; its full sequence is Eukaryotic translation initiation factor 3 subunit D-2 (551 aa).

The disordered stretch occupies residues 108–152; that stretch reads RARGRTGRGNATLGGLGGPVAGGSTANSTKYGKGRNTRNAQNMGR. The span at 119–128 shows a compositional bias: gly residues; the sequence is TLGGLGGPVA. Positions 290-304 are RNA gate; the sequence is QFDLLTVNETSLEPP. The interval 530-551 is disordered; sequence AFDSDGDDESESSEPFGNSIDN. Residues 531–541 show a composition bias toward acidic residues; that stretch reads FDSDGDDESES.

The protein belongs to the eIF-3 subunit D family. Component of the eukaryotic translation initiation factor 3 (eIF-3) complex. The eIF-3 complex interacts with pix.

It is found in the cytoplasm. In terms of biological role, mRNA cap-binding component of the eukaryotic translation initiation factor 3 (eIF-3) complex, which is involved in protein synthesis of a specialized repertoire of mRNAs and, together with other initiation factors, stimulates binding of mRNA and methionyl-tRNAi to the 40S ribosome. The eIF-3 complex specifically targets and initiates translation of a subset of mRNAs involved in cell proliferation. In the eIF-3 complex, eif3d specifically recognizes and binds the 7-methylguanosine cap of a subset of mRNAs. The sequence is that of Eukaryotic translation initiation factor 3 subunit D-2 from Drosophila yakuba (Fruit fly).